We begin with the raw amino-acid sequence, 446 residues long: Thymidine phosphorylase (446 aa).

It belongs to the thymidine/pyrimidine-nucleoside phosphorylase family. As to quaternary structure, homodimer.

The enzyme catalyses thymidine + phosphate = 2-deoxy-alpha-D-ribose 1-phosphate + thymine. It functions in the pathway pyrimidine metabolism; dTMP biosynthesis via salvage pathway; dTMP from thymine: step 1/2. The enzymes which catalyze the reversible phosphorolysis of pyrimidine nucleosides are involved in the degradation of these compounds and in their utilization as carbon and energy sources, or in the rescue of pyrimidine bases for nucleotide synthesis. In Psychromonas ingrahamii (strain DSM 17664 / CCUG 51855 / 37), this protein is Thymidine phosphorylase.